Consider the following 628-residue polypeptide: MLPDNLKDLYVQWLQELIDSLSEKQEQLINTYSKAKKNLIDHDGVFYYPKDLLKVKGIGATIAKRLEARLVKHCEEIGVDVPRKQLPIDNGTQGSKSLKRVRTQLRIDGINTNDTDINKPVRKKRKYIPKKRSGAYAILLALLELGAQNKGVIKPDIIEAAQKYTDHSMTPNYTTKEFYSAWSSIAQLKKHELVLIEGRPQQYTLTEEGLQLADTLRLADGIDIDGKSIASSMDTNNAYYSDEHTADFSALKHDLSGLTCAPIKDGTNSSGNYSILEKTFGSQDFNVRHHEIGMVQRSHTFGNGDSNNSIEPLPRDTSEFTTQPSLIQRRRFESVSYELWQPGTYEIYPVIDHREVRSHSDREFFFNAFKARDMKSEIRQLSLGDIIWVAKNKTTGQQCILNTIIERKRLDDLAMSIRDNRFMEQKNRLEKSGCKHKYYLIEETIGSSIGNMADALKTTLWIILVYYRFSMIRTVNAEDSVDKLHALHTVICESYKHKALVVLYPTDLKSQDHYRGILSIFQNEFERSGNLECCHTFDTFQDIMGKRELKTIKEITIHILMLVRGVSLEKAVFIQRHFPTLNHLLNAYRKCNSQMEAKLMMFQKFGNAPGAKKITKQLSEKLAETFAF.

The span at 298–310 (SHTFGNGDSNNSI) shows a compositional bias: polar residues. The segment at 298–318 (SHTFGNGDSNNSIEPLPRDTS) is disordered. Residues 348–445 (YPVIDHREVR…HKYYLIEETI (98 aa)) enclose the ERCC4 domain.

Belongs to the XPF family. Interacts with EME1. Requires Mg(2+) as cofactor.

It localises to the nucleus. In terms of biological role, interacts with EME1 to form a DNA structure-specific endonuclease with substrate preference for branched DNA structures with a 5'-end at the branch nick. Typical substrates include 3'-flap structures, D-loops, replication forks and nicked Holliday junctions. May be required in mitosis for the processing of stalled or collapsed replication fork intermediates. May be required in meiosis for the repair of meiosis-specific double strand breaks subsequent to single-end invasion (SEI). The polypeptide is Crossover junction endonuclease MUS81 (MUS81) (Candida glabrata (strain ATCC 2001 / BCRC 20586 / JCM 3761 / NBRC 0622 / NRRL Y-65 / CBS 138) (Yeast)).